Reading from the N-terminus, the 581-residue chain is Terpene synthase 2, chloroplastic (581 aa).

Residues Met1–Ala34 constitute a chloroplast transit peptide. Substrate contacts are provided by Arg299, Asp336, Asp340, and Arg480. Mg(2+) contacts are provided by Asp336 and Asp340. The DDXXD motif signature appears at Asp336–Asp340. The Mg(2+) site is built by Asp483, Ser487, and Glu491.

It belongs to the terpene synthase family. Monomer. Mg(2+) serves as cofactor.

It localises to the plastid. It is found in the chloroplast. The catalysed reaction is (2E,6E)-farnesyl diphosphate + H2O = (3S,6E)-nerolidol + diphosphate. It carries out the reaction (2E,6E,10E)-geranylgeranyl diphosphate + H2O = (6E,10E)-geranyllinalool + diphosphate. The enzyme catalyses (2E)-geranyl diphosphate + H2O = (S)-linalool + diphosphate. It participates in secondary metabolite biosynthesis; terpenoid biosynthesis. In terms of biological role, involved in sesquiterpene (C15), diterpene (C20) and monoterpene (C10) biosynthesis. Has sesquiterpene synthase activity, converting farnesyl diphosphate to nerolidol, the precursor of the volatile C11-homoterpene (E)-3,8-dimethyl-1,4,7-nonatriene (DMNT). Has diterpene synthase activity, converting geranylgeranyl diphosphate to (E,E)-geranyllinalool, the precursor of the volatile C16-homoterpene (E,E)-4,8,12-trimethyltrideca 1,3,7,11-tetraene (TMTT). Has monoterpene synthase activity, converting geranyl diphosphate into linalool. Forms only the S-isomers of the three tertiary terpene alcohols. The protein is Terpene synthase 2, chloroplastic of Zea mays (Maize).